A 119-amino-acid polypeptide reads, in one-letter code: Large ribosomal subunit protein bL20 (119 aa).

Belongs to the bacterial ribosomal protein bL20 family.

In terms of biological role, binds directly to 23S ribosomal RNA and is necessary for the in vitro assembly process of the 50S ribosomal subunit. It is not involved in the protein synthesizing functions of that subunit. This chain is Large ribosomal subunit protein bL20, found in Brevibacillus brevis (strain 47 / JCM 6285 / NBRC 100599).